Here is a 510-residue protein sequence, read N- to C-terminus: Chromosomal replication initiator protein DnaA (510 aa).

The segment at 1–87 is domain I, interacts with DnaA modulators; it reads MSVELWQQCV…IGSRRSSAPR (87 aa). The interval 87–173 is domain II; it reads RAAPNAPVSA…QVEGALKHTS (87 aa). A disordered region spans residues 140–160; that stretch reads DSFDAMAEPASAPASSGRAEQ. Positions 144–157 are enriched in low complexity; sequence AMAEPASAPASSGR. Residues 174–390 are domain III, AAA+ region; it reads YLNRTFTFDT…GALKRVIAHS (217 aa). ATP is bound by residues G218, G220, K221, and T222. The tract at residues 391-510 is domain IV, binds dsDNA; the sequence is HFMGRDITIE…YKNLLRTLTT (120 aa).

The protein belongs to the DnaA family. Oligomerizes as a right-handed, spiral filament on DNA at oriC.

The protein localises to the cytoplasm. Functionally, plays an essential role in the initiation and regulation of chromosomal replication. ATP-DnaA binds to the origin of replication (oriC) to initiate formation of the DNA replication initiation complex once per cell cycle. Binds the DnaA box (a 9 base pair repeat at the origin) and separates the double-stranded (ds)DNA. Forms a right-handed helical filament on oriC DNA; dsDNA binds to the exterior of the filament while single-stranded (ss)DNA is stabiized in the filament's interior. The ATP-DnaA-oriC complex binds and stabilizes one strand of the AT-rich DNA unwinding element (DUE), permitting loading of DNA polymerase. After initiation quickly degrades to an ADP-DnaA complex that is not apt for DNA replication. Binds acidic phospholipids. The chain is Chromosomal replication initiator protein DnaA from Pseudomonas putida (strain GB-1).